Reading from the N-terminus, the 377-residue chain is Carboxynorspermidine/carboxyspermidine decarboxylase (377 aa).

Position 41 is an N6-(pyridoxal phosphate)lysine (Lys-41). 2 residues coordinate substrate: Glu-238 and Asp-274.

Belongs to the Orn/Lys/Arg decarboxylase class-II family. NspC subfamily. As to quaternary structure, homodimer. Pyridoxal 5'-phosphate is required as a cofactor.

It is found in the cytoplasm. It catalyses the reaction carboxynorspermidine + H(+) = norspermidine + CO2. The catalysed reaction is carboxyspermidine + H(+) = spermidine + CO2. Its function is as follows. Catalyzes the decarboxylation of carboxynorspermidine and carboxyspermidine. Carboxynorspermidine is decarboxylated 20-fold more efficiently than carboxyspermidine. Exhibits some activity with L-ornithine, but shows no activity with L-arginine, L-lysine or meso-diaminopimelate. This chain is Carboxynorspermidine/carboxyspermidine decarboxylase, found in Vibrio vulnificus (strain CMCP6).